Here is a 220-residue protein sequence, read N- to C-terminus: Phosphatidylserine decarboxylase proenzyme (220 aa).

The active-site Schiff-base intermediate with substrate; via pyruvic acid is the Ser188. Residue Ser188 is modified to Pyruvic acid (Ser); by autocatalysis.

Belongs to the phosphatidylserine decarboxylase family. PSD-A subfamily. As to quaternary structure, heterodimer of a large membrane-associated beta subunit and a small pyruvoyl-containing alpha subunit. Pyruvate serves as cofactor. Is synthesized initially as an inactive proenzyme. Formation of the active enzyme involves a self-maturation process in which the active site pyruvoyl group is generated from an internal serine residue via an autocatalytic post-translational modification. Two non-identical subunits are generated from the proenzyme in this reaction, and the pyruvate is formed at the N-terminus of the alpha chain, which is derived from the carboxyl end of the proenzyme. The post-translation cleavage follows an unusual pathway, termed non-hydrolytic serinolysis, in which the side chain hydroxyl group of the serine supplies its oxygen atom to form the C-terminus of the beta chain, while the remainder of the serine residue undergoes an oxidative deamination to produce ammonia and the pyruvoyl prosthetic group on the alpha chain.

Its subcellular location is the cell membrane. It carries out the reaction a 1,2-diacyl-sn-glycero-3-phospho-L-serine + H(+) = a 1,2-diacyl-sn-glycero-3-phosphoethanolamine + CO2. The protein operates within phospholipid metabolism; phosphatidylethanolamine biosynthesis; phosphatidylethanolamine from CDP-diacylglycerol: step 2/2. Its function is as follows. Catalyzes the formation of phosphatidylethanolamine (PtdEtn) from phosphatidylserine (PtdSer). The protein is Phosphatidylserine decarboxylase proenzyme of Parabacteroides distasonis (strain ATCC 8503 / DSM 20701 / CIP 104284 / JCM 5825 / NCTC 11152).